Consider the following 238-residue polypeptide: Large ribosomal subunit protein uL5c (238 aa).

Belongs to the universal ribosomal protein uL5 family. As to quaternary structure, part of the 50S ribosomal subunit; contacts the 5S rRNA.

Its subcellular location is the plastid. It is found in the chloroplast. In terms of biological role, binds 5S rRNA, forms part of the central protuberance of the 50S subunit. The chain is Large ribosomal subunit protein uL5c (rpl5) from Phaeodactylum tricornutum (strain CCAP 1055/1).